We begin with the raw amino-acid sequence, 138 residues long: Drosulfakinins (138 aa).

The N-terminal stretch at 1-33 (MGLRSCTHFATLVMPLWALAFCFLVLVPVPAQT) is a signal peptide. The propeptide occupies 34–73 (TSLQISKGDRRLQDLESNMGAESDQPNANLVGTSLSRFGD). F82 is modified (phenylalanine amide). The propeptide occupies 86–108 (VPRPIIPIELDLLMDNDDENTKA). At Y114 the chain carries Sulfotyrosine. Phenylalanine amide is present on F119. Y131 carries the post-translational modification Sulfotyrosine. F136 carries the phenylalanine amide modification.

This sequence belongs to the gastrin/cholecystokinin family.

The protein localises to the secreted. In terms of biological role, drosulfakinin-0 (DSK 0) plays diverse biological roles including regulating gut muscle contraction in adults but not in larvae. This Drosophila teissieri (Fruit fly) protein is Drosulfakinins.